The following is a 93-amino-acid chain: Small ribosomal subunit protein uS19 (93 aa).

It belongs to the universal ribosomal protein uS19 family.

Its function is as follows. Protein S19 forms a complex with S13 that binds strongly to the 16S ribosomal RNA. This Oenococcus oeni (strain ATCC BAA-331 / PSU-1) protein is Small ribosomal subunit protein uS19.